A 499-amino-acid chain; its full sequence is Glutamyl-tRNA(Gln) amidotransferase subunit A (499 aa).

Residues Lys79 and Ser159 each act as charge relay system in the active site. Ser183 serves as the catalytic Acyl-ester intermediate.

This sequence belongs to the amidase family. GatA subfamily. In terms of assembly, heterotrimer of A, B and C subunits.

It catalyses the reaction L-glutamyl-tRNA(Gln) + L-glutamine + ATP + H2O = L-glutaminyl-tRNA(Gln) + L-glutamate + ADP + phosphate + H(+). Functionally, allows the formation of correctly charged Gln-tRNA(Gln) through the transamidation of misacylated Glu-tRNA(Gln) in organisms which lack glutaminyl-tRNA synthetase. The reaction takes place in the presence of glutamine and ATP through an activated gamma-phospho-Glu-tRNA(Gln). The chain is Glutamyl-tRNA(Gln) amidotransferase subunit A from Granulibacter bethesdensis (strain ATCC BAA-1260 / CGDNIH1).